A 294-amino-acid polypeptide reads, in one-letter code: 4-hydroxy-tetrahydrodipicolinate synthase (294 aa).

A pyruvate-binding site is contributed by threonine 45. Tyrosine 133 (proton donor/acceptor) is an active-site residue. Lysine 161 acts as the Schiff-base intermediate with substrate in catalysis. Isoleucine 203 provides a ligand contact to pyruvate.

It belongs to the DapA family. In terms of assembly, homotetramer; dimer of dimers.

The protein localises to the cytoplasm. It carries out the reaction L-aspartate 4-semialdehyde + pyruvate = (2S,4S)-4-hydroxy-2,3,4,5-tetrahydrodipicolinate + H2O + H(+). It functions in the pathway amino-acid biosynthesis; L-lysine biosynthesis via DAP pathway; (S)-tetrahydrodipicolinate from L-aspartate: step 3/4. Functionally, catalyzes the condensation of (S)-aspartate-beta-semialdehyde [(S)-ASA] and pyruvate to 4-hydroxy-tetrahydrodipicolinate (HTPA). The chain is 4-hydroxy-tetrahydrodipicolinate synthase from Shewanella frigidimarina (strain NCIMB 400).